The sequence spans 380 residues: Alkaline protease (380 aa).

The N-terminal stretch at 1–27 (MKKPLGKIVASTALLISVAFSSSIASA) is a signal peptide. Positions 28 to 112 (AEEAKEKYLI…EEDAEVTTMA (85 aa)) are excised as a propeptide. Residues 34–111 (KYLIGFNEQE…IEEDAEVTTM (78 aa)) enclose the Inhibitor I9 domain. Gln-113 is a binding site for Ca(2+). One can recognise a Peptidase S8 domain in the interval 116–379 (PWGISRVQAP…SGLVNAEAAT (264 aa)). The active-site Charge relay system is Asp-143. Residue Asp-151 participates in Ca(2+) binding. His-173 acts as the Charge relay system in catalysis. Ca(2+)-binding residues include Leu-184, Asn-186, Ile-188, Val-190, Ala-274, Tyr-276, and Ala-279. The active-site Charge relay system is the Ser-326.

Belongs to the peptidase S8 family. Ca(2+) serves as cofactor.

The protein localises to the secreted. In Alkalihalobacillus alcalophilus (Bacillus alcalophilus), this protein is Alkaline protease.